The chain runs to 748 residues: MERPQSSIWVFMLLLFMVLLQSPAWHVAAQRCPQTCVCDNSRRHVTCRHQNLTEVPNTIPELTQRLDLQGNILKVLPAAAFQDLPHLTHLDLRNCQVEMVAEGAFRGLGRLLLLNLASNRLSTLPQEALDGLGSLRRLELEGNMLEELRPGTFGALGSLTTLNLAHNALVYLPAMAFQGLLRTRWLQLSHNALSVLAPEALAGLPALRRLSLHHNELQALPGAALSQARSLARLELGHNPLTYTGEEDGLALPGLRELALDHGSLQALGPRAFAHCPRLHTLDLRGNQLTTLPPLQVPGQLRRLRLQGNPLWCACHARPLLEWLVRARVRSDGACRGPRRLRGEALDTLRPSDLRCPGDAAAGDGDGDEDEDRPAGPRAPPLRSPHGEAAWATPCPPACACVAETRHSTCDGRGLQAVPRGFPNDTQLLDLRRNHFPSVPRAAFPGLRHLVSLHLQHCGVAELEPGALAGLDRLLYLYLSHNQLSGLSAAALEGAPNLGYLYLEHNRFLRIPGTALRALPTLVSLHLQDNAVDRLAPGDLAGARALRCLYLSGNHITQVSPGALGPARELEKLHLDRNRLREVPTGALEGLPALKELQLSGNPLRALPDGAFQPVGRSLQQLFLNSSDLEQISPRAFSGLGKGLRSLYLHKNQLQSLPAPLGLSGLELVDLSGNPFHCDCQLLPLHRWLTGLNLRVGATCATPPSVRGQKVKVAAPVFEACPGWTARKAKRTPTSRGSARRTPSLSRH.

The N-terminal stretch at 1–29 (MERPQSSIWVFMLLLFMVLLQSPAWHVAA) is a signal peptide. Residues 30-61 (QRCPQTCVCDNSRRHVTCRHQNLTEVPNTIPE) enclose the LRRNT 1 domain. A glycan (N-linked (GlcNAc...) asparagine) is linked at asparagine 51. LRR repeat units lie at residues 85-107 (PHLT…AFRG), 108-131 (LGRL…ALDG), 132-155 (LGSL…TFGA), 156-179 (LGSL…AFQG), 181-203 (LRTR…ALAG), 204-227 (LPAL…ALSQ), 229-252 (RSLA…GLAL), 253-275 (PGLR…AFAH), and 276-299 (CPRL…QVPG). The 49-residue stretch at 309 to 357 (NPLWCACHARPLLEWLVRARVRSDGACRGPRRLRGEALDTLRPSDLRCP) folds into the LRRCT 1 domain. The interval 352–389 (SDLRCPGDAAAGDGDGDEDEDRPAGPRAPPLRSPHGEA) is disordered. In terms of domain architecture, LRRNT 2 spans 394–428 (PCPPACACVAETRHSTCDGRGLQAVPRGFPNDTQL). Cysteine 395 and cysteine 410 are disulfide-bonded. LRR repeat units follow at residues 423 to 446 (PNDT…AFPG), 448 to 470 (RHLV…ALAG), 471 to 494 (LDRL…ALEG), 496 to 518 (PNLG…ALRA), 519 to 542 (LPTL…DLAG), 544 to 566 (RALR…ALGP), 567 to 590 (AREL…ALEG), 591 to 614 (LPAL…AFQP), 616 to 639 (GRSL…AFSG), and 641 to 665 (GKGL…GLSG). Asparagine 625 carries an N-linked (GlcNAc...) asparagine glycan. In terms of domain architecture, LRRCT 2 spans 674–722 (NPFHCDCQLLPLHRWLTGLNLRVGATCATPPSVRGQKVKVAAPVFEACP). 2 disulfides stabilise this stretch: cysteine 678-cysteine 721 and cysteine 680-cysteine 700. A disordered region spans residues 728–748 (KAKRTPTSRGSARRTPSLSRH). The segment covering 734-748 (TSRGSARRTPSLSRH) has biased composition (polar residues).

Belongs to the small leucine-rich proteoglycan (SLRP) family. SLRP class IV subfamily. As to quaternary structure, associates with collagen and binds to collagen fibrils. In terms of tissue distribution, expressed in cartilage, including articular knee cartilage, where it localizes to the extracellular space in the area immediately surrounding the chondrocytes, not detected in any other tissues (at protein level).

It is found in the secreted. The protein localises to the extracellular space. The protein resides in the extracellular matrix. Potential negative modulator of chondrocyte differentiation. Inhibits collagen fibrillogenesis in vitro. May influence chondrocyte's differentiation by acting on its cellular collagenous microenvironment. The chain is Chondroadherin-like protein (Chadl) from Mus musculus (Mouse).